We begin with the raw amino-acid sequence, 64 residues long: Large ribosomal subunit protein bL35 (64 aa).

The protein belongs to the bacterial ribosomal protein bL35 family.

This chain is Large ribosomal subunit protein bL35, found in Pseudomonas entomophila (strain L48).